Reading from the N-terminus, the 316-residue chain is 1-aminocyclopropane-1-carboxylate oxidase 2 (316 aa).

Positions 153 to 253 (PNFGTKVSNY…RMSLASFYNP (101 aa)) constitute a Fe2OG dioxygenase domain. The Fe cation site is built by histidine 177, aspartate 179, and histidine 234.

Belongs to the iron/ascorbate-dependent oxidoreductase family. Fe cation serves as cofactor. In terms of tissue distribution, leaves.

The enzyme catalyses 1-aminocyclopropane-1-carboxylate + L-ascorbate + O2 = ethene + L-dehydroascorbate + hydrogen cyanide + CO2 + 2 H2O. It functions in the pathway alkene biosynthesis; ethylene biosynthesis via S-adenosyl-L-methionine; ethylene from S-adenosyl-L-methionine: step 2/2. This is 1-aminocyclopropane-1-carboxylate oxidase 2 (ACO2) from Solanum lycopersicum (Tomato).